The chain runs to 327 residues: Vacuolar protein sorting-associated protein 26A (327 aa).

Residues arginine 306–methionine 327 form a disordered region. Phosphoserine is present on serine 315. Positions proline 316–methionine 327 are enriched in polar residues.

Belongs to the VPS26 family. As to quaternary structure, component of the heterotrimeric retromer cargo-selective complex (CSC), also described as vacuolar protein sorting subcomplex (VPS), formed by VPS26 (VPS26A or VPS26B), VPS29 and VPS35. The CSC has a highly elongated structure with VPS26 and VPS29 binding independently at opposite distal ends of VPS35 as central platform. The CSC is believed to associate with variable sorting nexins to form functionally distinct retromer complex variants. The originally described retromer complex (also called SNX-BAR retromer) is a pentamer containing the CSC and a heterodimeric membrane-deforming subcomplex formed between SNX1 or SNX2 and SNX5 or SNX6 (also called SNX-BAR subcomplex); the respective CSC and SNX-BAR subcomplexes associate with low affinity. The CSC associates with SNX3 to form a SNX3-retromer complex. The CSC associates with SNX27, the WASH complex and the SNX-BAR subcomplex to form the SNX27-retromer complex. Interacts with VPS29, VPS35, SNX27. Interacts with SNX1, SNX2, SNX5, SNX6, SNX3, RAB7A, ECPAS, EHD1, WASHC5, SORL1.

It localises to the cytoplasm. The protein resides in the endosome membrane. Its subcellular location is the early endosome. Acts as a component of the retromer cargo-selective complex (CSC). The CSC is believed to be the core functional component of retromer or respective retromer complex variants acting to prevent missorting of selected transmembrane cargo proteins into the lysosomal degradation pathway. The recruitment of the CSC to the endosomal membrane involves RAB7A and SNX3. The SNX-BAR retromer mediates retrograde transport of cargo proteins from endosomes to the trans-Golgi network (TGN) and is involved in endosome-to-plasma membrane transport for cargo protein recycling. The SNX3-retromer mediates the retrograde endosome-to-TGN transport of WLS distinct from the SNX-BAR retromer pathway. The SNX27-retromer is believed to be involved in endosome-to-plasma membrane trafficking and recycling of a broad spectrum of cargo proteins. The CSC complex seems to act as recruitment hub for other proteins, such as the WASH complex and TBC1D5. Required for retrograde transport of lysosomal enzyme receptor IGF2R. Required to regulate transcytosis of the polymeric immunoglobulin receptor (pIgR-pIgA). Required for the endosomal localization of WASHC2 (indicative for the WASH complex). Required for the endosomal localization of TBC1D5. Mediates retromer cargo recognition of SORL1 and is involved in trafficking of SORL1 implicated in sorting and processing of APP. Involved in retromer-independent lysosomal sorting of F2R. Involved in recycling of ADRB2. Acts redundantly with VSP26B in SNX-27 mediated endocytic recycling of SLC2A1/GLUT1. Enhances the affinity of SNX27 for PDZ-binding motifs in cargo proteins. The sequence is that of Vacuolar protein sorting-associated protein 26A (Vps26a) from Mus musculus (Mouse).